Here is a 446-residue protein sequence, read N- to C-terminus: 3-phosphoshikimate 1-carboxyvinyltransferase (446 aa).

Residues 1-20 (MSTWPAPSTATPVHATVTVP) are disordered. Residues Lys-23, Ser-24, and Arg-28 each coordinate 3-phosphoshikimate. A phosphoenolpyruvate-binding site is contributed by Lys-23. Phosphoenolpyruvate-binding residues include Gly-100 and Arg-128. 3-phosphoshikimate contacts are provided by Ser-171, Ser-172, Gln-173, Ser-200, Glu-315, and His-344. Gln-173 contributes to the phosphoenolpyruvate binding site. Glu-315 acts as the Proton acceptor in catalysis. Residues Arg-348, Arg-389, and Lys-414 each coordinate phosphoenolpyruvate.

This sequence belongs to the EPSP synthase family. As to quaternary structure, monomer.

The protein localises to the cytoplasm. The enzyme catalyses 3-phosphoshikimate + phosphoenolpyruvate = 5-O-(1-carboxyvinyl)-3-phosphoshikimate + phosphate. Its pathway is metabolic intermediate biosynthesis; chorismate biosynthesis; chorismate from D-erythrose 4-phosphate and phosphoenolpyruvate: step 6/7. Functionally, catalyzes the transfer of the enolpyruvyl moiety of phosphoenolpyruvate (PEP) to the 5-hydroxyl of shikimate-3-phosphate (S3P) to produce enolpyruvyl shikimate-3-phosphate and inorganic phosphate. This is 3-phosphoshikimate 1-carboxyvinyltransferase from Mycolicibacterium vanbaalenii (strain DSM 7251 / JCM 13017 / BCRC 16820 / KCTC 9966 / NRRL B-24157 / PYR-1) (Mycobacterium vanbaalenii).